The primary structure comprises 350 residues: MSKKPIVLKLGKDAFGDQAWGELEKIADVITIPESTTREQFLREVKDPQNKLSQVQVITRTARSVKNTGRFDEELALALPSSVVAVCHTGAGYDQIDVEPFKKRHIQVANVPDLVSNATADTHVFLLLGALRNFGIGNRRLIEGNWPEAGPACGSPFGYDPEGKTVGILGLGRIGRCILERLKPFGFENFIYHNRHQLPSEEEHGCEYVGFEEFLKRSDIVSVNVPLNHNTHHLINAETIEKMKDGVVIVNTARGAVIDEQAMTDALRSGKIRSAGLDVFEYEPKISKELLSMSQVLGLPHMGTHSVETRKKMEELVVENAKNVILTGKVLTIVPELQNEDWPNESKPLV.

Threonine 31 carries the phosphothreonine modification. NAD(+) contacts are provided by residues 173–174 (RI), 252–254 (TAR), and aspartate 278. The active site involves arginine 254. Glutamate 283 is a catalytic residue. Histidine 301 acts as the Proton donor in catalysis. 301–304 (HMGT) is a binding site for NAD(+).

It belongs to the D-isomer specific 2-hydroxyacid dehydrogenase family.

The protein localises to the cytoplasm. The protein resides in the nucleus. Its subcellular location is the mitochondrion. The enzyme catalyses glycolate + NAD(+) = glyoxylate + NADH + H(+). The catalysed reaction is glycolate + NADP(+) = glyoxylate + NADPH + H(+). It catalyses the reaction (R)-glycerate + NAD(+) = 3-hydroxypyruvate + NADH + H(+). It carries out the reaction (R)-glycerate + NADP(+) = 3-hydroxypyruvate + NADPH + H(+). In terms of biological role, glyoxylate reductase that reversibly reduces glyoxylate to glycolate, or alternatively hydroxypyruvate to D-glycerate, using either NADPH or NADH as a cosubstrate. Does not act as a hydroxyisocaproate dehydrogenase even though it also has minor activity on alpha-ketoisocaproate. This chain is Glyoxylate reductase 1, found in Saccharomyces cerevisiae (strain ATCC 204508 / S288c) (Baker's yeast).